Here is a 519-residue protein sequence, read N- to C-terminus: Arabinose import ATP-binding protein AraG 2 (519 aa).

ABC transporter domains are found at residues 29–264 and 264–515; these read LSLD…MVGR and RSIE…LIKL. Residue 61-68 participates in ATP binding; it reads GENGAGKS.

It belongs to the ABC transporter superfamily. Arabinose importer (TC 3.A.1.2.2) family. The complex is composed of two ATP-binding proteins (AraG), two transmembrane proteins (AraH) and a solute-binding protein (AraF).

Its subcellular location is the cell inner membrane. The catalysed reaction is L-arabinose(out) + ATP + H2O = L-arabinose(in) + ADP + phosphate + H(+). Part of the ABC transporter complex AraFGH involved in arabinose import. Responsible for energy coupling to the transport system. The sequence is that of Arabinose import ATP-binding protein AraG 2 from Burkholderia ambifaria (strain ATCC BAA-244 / DSM 16087 / CCUG 44356 / LMG 19182 / AMMD) (Burkholderia cepacia (strain AMMD)).